The sequence spans 453 residues: Probable glycine dehydrogenase (decarboxylating) subunit 1 (453 aa).

It belongs to the GcvP family. N-terminal subunit subfamily. The glycine cleavage system is composed of four proteins: P, T, L and H. In this organism, the P 'protein' is a heterodimer of two subunits.

The enzyme catalyses N(6)-[(R)-lipoyl]-L-lysyl-[glycine-cleavage complex H protein] + glycine + H(+) = N(6)-[(R)-S(8)-aminomethyldihydrolipoyl]-L-lysyl-[glycine-cleavage complex H protein] + CO2. The glycine cleavage system catalyzes the degradation of glycine. The P protein binds the alpha-amino group of glycine through its pyridoxal phosphate cofactor; CO(2) is released and the remaining methylamine moiety is then transferred to the lipoamide cofactor of the H protein. The chain is Probable glycine dehydrogenase (decarboxylating) subunit 1 from Caulobacter sp. (strain K31).